Reading from the N-terminus, the 144-residue chain is Large ribosomal subunit protein uL16 (144 aa).

The protein belongs to the universal ribosomal protein uL16 family. Part of the 50S ribosomal subunit.

In terms of biological role, binds 23S rRNA and is also seen to make contacts with the A and possibly P site tRNAs. The protein is Large ribosomal subunit protein uL16 of Erythrobacter litoralis (strain HTCC2594).